Here is a 400-residue protein sequence, read N- to C-terminus: Argininosuccinate synthase (400 aa).

Residue 8 to 16 participates in ATP binding; that stretch reads AYSGGLDTS. Y87 provides a ligand contact to L-citrulline. G117 provides a ligand contact to ATP. Residues T119, N123, and D124 each contribute to the L-aspartate site. N123 contributes to the L-citrulline binding site. Residues R127, S175, E260, and Y272 each coordinate L-citrulline.

It belongs to the argininosuccinate synthase family. Type 1 subfamily. As to quaternary structure, homotetramer.

It is found in the cytoplasm. It catalyses the reaction L-citrulline + L-aspartate + ATP = 2-(N(omega)-L-arginino)succinate + AMP + diphosphate + H(+). It participates in amino-acid biosynthesis; L-arginine biosynthesis; L-arginine from L-ornithine and carbamoyl phosphate: step 2/3. This Mycobacterium sp. (strain JLS) protein is Argininosuccinate synthase.